We begin with the raw amino-acid sequence, 992 residues long: RNA-binding protein 12 (992 aa).

The region spanning 304–379 (LYVSVHGMPF…RYVEVSPATE (76 aa)) is the RRM 1 domain. Ser-352 and Ser-375 each carry phosphoserine. A disordered region spans residues 393–424 (QSMGPSGQAHPPPQTLPRSKSPSGQKRSRSRS). Over residues 408 to 417 (LPRSKSPSGQ) the composition is skewed to polar residues. Residues Ser-420, Ser-422, and Ser-424 each carry the phosphoserine modification. The RRM 2 domain maps to 430–507 (FCVYLKGLPF…RFIQVHPITK (78 aa)). Ser-525 carries the post-translational modification Phosphoserine. A disordered region spans residues 849 to 913 (FGGIPQNFGN…PGFGASSGKP (65 aa)). Residues 876-887 (LGSVPGHLSGPP) are compositionally biased toward low complexity. An RRM 3 domain is found at 916-992 (TIIKVQNMPF…GSRKVKLVLG (77 aa)).

Its subcellular location is the nucleus. The sequence is that of RNA-binding protein 12 (Rbm12) from Mus musculus (Mouse).